We begin with the raw amino-acid sequence, 555 residues long: MTTPANPRLPIHAAHGTELTARSWQTEAPLRMLMNNLDPENAERPEDLVVYGGTGRAARSWEAYDALVRTLTTLGDDETMLVQSGKPVGVMRTHEWAPRVLIANSNLVGDWANWEEFRRLEDLGLTMYGQMTAGSWIYIGTQGILQGTFETFAAVADKRFGGTLAGTITVTAGLGGMGGAQPLAVTMNDGVVICVECDPERIRRRIDHRYLDVEAPSLEAAVALAVEARDERRPLSIGLLGNAAEVLPRILETEVPVDIVTDQTSAHDPLYYLPVGVPFEEWAARREADPEGFTKEARASMAAHVRAMVELQDRGAEVFDYGNSIRDEARKGGYDRAFEFPGFVPAYIRPLFCEGKGPFRWAALSGDPADIAATDRAILELFPANERLRKWITMAGERVHFQGLPARICWLGYGERHLAGLRFNEMVASGELKAPIVIGRDHLDCGSVASPYRETEGMLDGSDAIADWAVLNALVNTASGASWVSFHHGGGVGIGRSLHAGQVCVADGTDLAAQKIERVLTNDPGMGVIRHVDAGYDRAAEVARERGVRIPMSEG.

NAD(+) contacts are provided by residues 52-53 (GG), glutamine 130, 176-178 (GMG), glutamate 196, arginine 201, 242-243 (NA), 263-267 (QTSAH), 272-273 (YL), and tyrosine 321. Cysteine 409 is an active-site residue. NAD(+) is bound at residue glycine 491.

The protein belongs to the urocanase family. NAD(+) serves as cofactor.

Its subcellular location is the cytoplasm. The catalysed reaction is 4-imidazolone-5-propanoate = trans-urocanate + H2O. The protein operates within amino-acid degradation; L-histidine degradation into L-glutamate; N-formimidoyl-L-glutamate from L-histidine: step 2/3. In terms of biological role, catalyzes the conversion of urocanate to 4-imidazolone-5-propionate. The chain is Urocanate hydratase from Nocardioides sp. (strain ATCC BAA-499 / JS614).